Here is a 305-residue protein sequence, read N- to C-terminus: tRNA uridine(34) hydroxylase (305 aa).

The Rhodanese domain maps to 126–220 (SDPEVIVIDT…YLEQIPPEES (95 aa)). C180 serves as the catalytic Cysteine persulfide intermediate.

This sequence belongs to the TrhO family.

The enzyme catalyses uridine(34) in tRNA + AH2 + O2 = 5-hydroxyuridine(34) in tRNA + A + H2O. Its function is as follows. Catalyzes oxygen-dependent 5-hydroxyuridine (ho5U) modification at position 34 in tRNAs. The sequence is that of tRNA uridine(34) hydroxylase from Trichormus variabilis (strain ATCC 29413 / PCC 7937) (Anabaena variabilis).